Consider the following 122-residue polypeptide: Toxin CSTX-1 (122 aa).

The first 20 residues, 1–20 (MKVLIISAVLFITIFSNISA), serve as a signal peptide directing secretion. The propeptide occupies 21–47 (EIEDDFLEDESFEAEDIIPFFENEQAR). 4 cysteine pairs are disulfide-bonded: Cys-49–Cys-64, Cys-56–Cys-73, Cys-63–Cys-91, and Cys-75–Cys-89. A predicted alpha-helix region spans residues 99 to 112 (AIETGLNIFRGLFK). The residue at position 108 (Arg-108) is an Arginine amide; in CSTX-2a. Lysine amide; in omega-ctenitoxin-Cs1a is present on Lys-121.

This sequence belongs to the neurotoxin 19 (CSTX) family. 04 (U1-Lctx) subfamily. In terms of assembly, monomer. Interacts with CSTX-13 (AC P83919) (Kd=430 nM), but does not interact with CSTX-9 (AC P58604). As to expression, expressed by the venom gland.

The protein localises to the secreted. It localises to the target cell membrane. In terms of biological role, spider venom toxin that shows calcium channel blocking activity and exhibits cytolytic activity by affecting the outer leaflet curvature and/or pore formation across the membrane. It blocks L-type calcium channels (Cav1/CACNA1) in mammalian neurons at nanomolar concentrations. Furthermore, it produces a slow voltage-independent block of mid/low and high voltage-activated calcium channels in cockroach neurons. Potassium ions, histamine, M-ctenitoxin-Cs1a (AC P83619), CSTX-9 (AC P58604), and CSTX-13 (AC P83919) synergistically increase the insecticidal activity of this toxin. In vivo, it causes paralysis in blow flies and provokes death in drosophila. Blocks voltage-activated calcium channels (Cav). Does not induce cell membrane permeability increase when tested on Xenopus oocytes. No alpha-helical structures are detectable. Is 7-fold less neurotoxic than omega-ctenitoxin-Cs1a on drosophila flies. Functionally, blocks voltage-activated calcium channels (Cav). Is 190-fold less neurotoxic than omega-ctenitoxin-Cs1a on drosophila flies. The sequence is that of Toxin CSTX-1 from Cupiennius salei (American wandering spider).